The primary structure comprises 278 residues: Shikimate dehydrogenase (NADP(+)) (278 aa).

Shikimate contacts are provided by residues 23–25 (SRS) and Thr-70. Catalysis depends on Lys-74, which acts as the Proton acceptor. An NADP(+)-binding site is contributed by Glu-86. Residues Asn-95 and Asp-110 each contribute to the shikimate site. NADP(+) contacts are provided by residues 135–139 (GAGGA), 159–164 (NRTKEK), and Met-224. Tyr-226 provides a ligand contact to shikimate. Gly-248 lines the NADP(+) pocket.

This sequence belongs to the shikimate dehydrogenase family. As to quaternary structure, homodimer.

It catalyses the reaction shikimate + NADP(+) = 3-dehydroshikimate + NADPH + H(+). It functions in the pathway metabolic intermediate biosynthesis; chorismate biosynthesis; chorismate from D-erythrose 4-phosphate and phosphoenolpyruvate: step 4/7. Its function is as follows. Involved in the biosynthesis of the chorismate, which leads to the biosynthesis of aromatic amino acids. Catalyzes the reversible NADPH linked reduction of 3-dehydroshikimate (DHSA) to yield shikimate (SA). The polypeptide is Shikimate dehydrogenase (NADP(+)) (Alcanivorax borkumensis (strain ATCC 700651 / DSM 11573 / NCIMB 13689 / SK2)).